The following is a 707-amino-acid chain: Lipase maturation factor 2 (707 aa).

Transmembrane regions (helical) follow at residues 10 to 30 (LFLQ…YTQI), 78 to 98 (LELL…LSPL), 102 to 122 (VIYL…QVFL), 123 to 143 (YFQW…VAPL), 165 to 185 (DLPF…SGVV), 227 to 247 (LSVV…FAPI), 259 to 279 (VLLQ…LMTL), 310 to 330 (ALLA…LAYG), 364 to 384 (LTLP…LSAL), and 399 to 419 (AVVQ…ISLV). Residues Asn489 and Asn616 are each glycosylated (N-linked (GlcNAc...) asparagine). A helical transmembrane segment spans residues 637–657 (ALLWGLLMAVGAVRFVQALLA). Positions 665-707 (PLAPVSGEKRRPASQKDSGAASEQATAAPNPCSSSSRTTRRKK) are disordered. Positions 679–691 (QKDSGAASEQATA) are enriched in polar residues.

It belongs to the lipase maturation factor family.

The protein resides in the endoplasmic reticulum membrane. Involved in the maturation of specific proteins in the endoplasmic reticulum. May be required for maturation and transport of active lipoprotein lipase (LPL) through the secretory pathway. The sequence is that of Lipase maturation factor 2 (LMF2) from Homo sapiens (Human).